We begin with the raw amino-acid sequence, 82 residues long: MIKLRLKRFGKKREVSYRIVATNSTSRRDGLPLEELGFYNPRTNETRLDVPAIVRRLQQGAQPTETVRSILRKAQIFEQLKA.

Belongs to the bacterial ribosomal protein bS16 family.

This Synechococcus elongatus (strain ATCC 33912 / PCC 7942 / FACHB-805) (Anacystis nidulans R2) protein is Small ribosomal subunit protein bS16.